Here is a 174-residue protein sequence, read N- to C-terminus: Superoxide dismutase [Cu-Zn] (174 aa).

An N-terminal signal peptide occupies residues methionine 1 to alanine 20. Residues histidine 68, histidine 70, and histidine 93 each coordinate Cu cation. Residues cysteine 75 and cysteine 170 are joined by a disulfide bond. Residues histidine 93, histidine 102, histidine 110, and aspartate 113 each contribute to the Zn(2+) site. Histidine 148 is a binding site for Cu cation.

The protein belongs to the Cu-Zn superoxide dismutase family. As to quaternary structure, homodimer. Cu cation serves as cofactor. It depends on Zn(2+) as a cofactor.

It is found in the periplasm. The enzyme catalyses 2 superoxide + 2 H(+) = H2O2 + O2. In terms of biological role, destroys radicals which are normally produced within the cells and which are toxic to biological systems. This chain is Superoxide dismutase [Cu-Zn] (sodC), found in Brucella melitensis biotype 1 (strain ATCC 23456 / CCUG 17765 / NCTC 10094 / 16M).